The primary structure comprises 337 residues: UDP-3-O-acylglucosamine N-acyltransferase (337 aa).

Histidine 238 serves as the catalytic Proton acceptor.

It belongs to the transferase hexapeptide repeat family. LpxD subfamily. As to quaternary structure, homotrimer.

It catalyses the reaction a UDP-3-O-[(3R)-3-hydroxyacyl]-alpha-D-glucosamine + a (3R)-hydroxyacyl-[ACP] = a UDP-2-N,3-O-bis[(3R)-3-hydroxyacyl]-alpha-D-glucosamine + holo-[ACP] + H(+). It functions in the pathway bacterial outer membrane biogenesis; LPS lipid A biosynthesis. Functionally, catalyzes the N-acylation of UDP-3-O-acylglucosamine using 3-hydroxyacyl-ACP as the acyl donor. Is involved in the biosynthesis of lipid A, a phosphorylated glycolipid that anchors the lipopolysaccharide to the outer membrane of the cell. The polypeptide is UDP-3-O-acylglucosamine N-acyltransferase (Xanthomonas axonopodis pv. citri (strain 306)).